The chain runs to 294 residues: 33 kDa chaperonin (294 aa).

2 cysteine pairs are disulfide-bonded: C239–C241 and C272–C275.

It belongs to the HSP33 family. In terms of processing, under oxidizing conditions two disulfide bonds are formed involving the reactive cysteines. Under reducing conditions zinc is bound to the reactive cysteines and the protein is inactive.

Its subcellular location is the cytoplasm. Its function is as follows. Redox regulated molecular chaperone. Protects both thermally unfolding and oxidatively damaged proteins from irreversible aggregation. Plays an important role in the bacterial defense system toward oxidative stress. This chain is 33 kDa chaperonin, found in Listeria monocytogenes serotype 4a (strain HCC23).